A 458-amino-acid chain; its full sequence is L-hydantoinase (458 aa).

Zn(2+)-binding residues include H60, H62, K147, H183, H239, and D312. K147 is modified (N6-carboxylysine).

In terms of assembly, homotetramer. The cofactor is Zn(2+). Carboxylation allows a single lysine to coordinate two zinc ions.

Rather more predominant for the cleavage of aryl- than for alkyl-hydantoin derivatives. The stereoselectivity of this enzyme depends on the substrate used for bioconversion: strictly L-selective for the cleavage of D,L-5-indolylmethylhydantoin, but D-selective for the hydrolysis of D,L-methylthioethylhydantoin. This is L-hydantoinase (lhyD) from Paenarthrobacter aurescens (Arthrobacter aurescens).